Consider the following 350-residue polypeptide: N-acetyllactosaminide beta-1,3-N-acetylglucosaminyltransferase 4 (350 aa).

Over 1-4 (MLPR) the chain is Cytoplasmic. A helical; Signal-anchor for type II membrane protein transmembrane segment spans residues 5–25 (LGCVLFCSLVVLLLSCLLLLK). Residues 26–350 (ERIPAGSSKA…RLKCAATHKP (325 aa)) are Lumenal-facing. Residues asparagine 53 and asparagine 166 are each glycosylated (N-linked (GlcNAc...) asparagine).

It belongs to the glycosyltransferase 31 family.

Its subcellular location is the golgi apparatus membrane. It carries out the reaction a beta-D-galactosyl-(1-&gt;4)-N-acetyl-beta-D-glucosaminyl derivative + UDP-N-acetyl-alpha-D-glucosamine = an N-acetyl-beta-D-glucosaminyl-(1-&gt;3)-beta-D-galactosyl-(1-&gt;4)-N-acetyl-beta-D-glucosaminyl derivative + UDP + H(+). Its pathway is protein modification; protein glycosylation. Beta-1,3-N-acetylglucosaminyltransferase involved in the synthesis of poly-N-acetyllactosamine. Has activity for type 2 oligosaccharides. The polypeptide is N-acetyllactosaminide beta-1,3-N-acetylglucosaminyltransferase 4 (B3gnt4) (Mus musculus (Mouse)).